The chain runs to 180 residues: ATP-dependent protease subunit HslV (180 aa).

Residue Thr5 is part of the active site. The Na(+) site is built by Gly165, Cys168, and Thr171.

Belongs to the peptidase T1B family. HslV subfamily. As to quaternary structure, a double ring-shaped homohexamer of HslV is capped on each side by a ring-shaped HslU homohexamer. The assembly of the HslU/HslV complex is dependent on binding of ATP.

It localises to the cytoplasm. The catalysed reaction is ATP-dependent cleavage of peptide bonds with broad specificity.. Its activity is regulated as follows. Allosterically activated by HslU binding. Its function is as follows. Protease subunit of a proteasome-like degradation complex believed to be a general protein degrading machinery. The sequence is that of ATP-dependent protease subunit HslV from Helicobacter pylori (strain G27).